We begin with the raw amino-acid sequence, 729 residues long: Fatty acid oxidation complex subunit alpha (729 aa).

The tract at residues 1-189 (MLYQSETLQL…KIGLVDAVVD (189 aa)) is enoyl-CoA hydratase/isomerase. D296 provides a ligand contact to substrate. A 3-hydroxyacyl-CoA dehydrogenase region spans residues 311 to 729 (AAPKLAAVLG…LLDVSTNQPA (419 aa)). Residues M324, D343, 400–402 (VVE), K407, and S429 contribute to the NAD(+) site. H450 acts as the For 3-hydroxyacyl-CoA dehydrogenase activity in catalysis. Residue N453 participates in NAD(+) binding. N500 and Y660 together coordinate substrate.

In the N-terminal section; belongs to the enoyl-CoA hydratase/isomerase family. The protein in the C-terminal section; belongs to the 3-hydroxyacyl-CoA dehydrogenase family. Heterotetramer of two alpha chains (FadB) and two beta chains (FadA).

It catalyses the reaction a (3S)-3-hydroxyacyl-CoA + NAD(+) = a 3-oxoacyl-CoA + NADH + H(+). The enzyme catalyses a (3S)-3-hydroxyacyl-CoA = a (2E)-enoyl-CoA + H2O. It carries out the reaction a 4-saturated-(3S)-3-hydroxyacyl-CoA = a (3E)-enoyl-CoA + H2O. The catalysed reaction is (3S)-3-hydroxybutanoyl-CoA = (3R)-3-hydroxybutanoyl-CoA. It catalyses the reaction a (3Z)-enoyl-CoA = a 4-saturated (2E)-enoyl-CoA. The enzyme catalyses a (3E)-enoyl-CoA = a 4-saturated (2E)-enoyl-CoA. Its pathway is lipid metabolism; fatty acid beta-oxidation. Functionally, involved in the aerobic and anaerobic degradation of long-chain fatty acids via beta-oxidation cycle. Catalyzes the formation of 3-oxoacyl-CoA from enoyl-CoA via L-3-hydroxyacyl-CoA. It can also use D-3-hydroxyacyl-CoA and cis-3-enoyl-CoA as substrate. The polypeptide is Fatty acid oxidation complex subunit alpha (Yersinia pseudotuberculosis serotype O:1b (strain IP 31758)).